Consider the following 440-residue polypeptide: Light-independent protochlorophyllide reductase subunit B (440 aa).

Residue Asp36 participates in [4Fe-4S] cluster binding. A substrate-binding site is contributed by 427–428 (KD).

It belongs to the ChlB/BchB/BchZ family. As to quaternary structure, protochlorophyllide reductase is composed of three subunits; ChlL, ChlN and ChlB. Forms a heterotetramer of two ChlB and two ChlN subunits. [4Fe-4S] cluster serves as cofactor.

It localises to the plastid. The protein localises to the cyanelle. The enzyme catalyses chlorophyllide a + oxidized 2[4Fe-4S]-[ferredoxin] + 2 ADP + 2 phosphate = protochlorophyllide a + reduced 2[4Fe-4S]-[ferredoxin] + 2 ATP + 2 H2O. Its pathway is porphyrin-containing compound metabolism; chlorophyll biosynthesis (light-independent). Its function is as follows. Component of the dark-operative protochlorophyllide reductase (DPOR) that uses Mg-ATP and reduced ferredoxin to reduce ring D of protochlorophyllide (Pchlide) to form chlorophyllide a (Chlide). This reaction is light-independent. The NB-protein (ChlN-ChlB) is the catalytic component of the complex. This is Light-independent protochlorophyllide reductase subunit B from Cyanophora paradoxa.